Reading from the N-terminus, the 98-residue chain is NADH-ubiquinone oxidoreductase chain 4L (98 aa).

3 consecutive transmembrane segments (helical) span residues 1–21 (MSLT…GLLM), 29–49 (SLLC…MVIL), and 61–81 (IILL…LVMV).

Belongs to the complex I subunit 4L family. Core subunit of respiratory chain NADH dehydrogenase (Complex I) which is composed of 45 different subunits.

The protein localises to the mitochondrion inner membrane. The enzyme catalyses a ubiquinone + NADH + 5 H(+)(in) = a ubiquinol + NAD(+) + 4 H(+)(out). In terms of biological role, core subunit of the mitochondrial membrane respiratory chain NADH dehydrogenase (Complex I) which catalyzes electron transfer from NADH through the respiratory chain, using ubiquinone as an electron acceptor. Part of the enzyme membrane arm which is embedded in the lipid bilayer and involved in proton translocation. This Vampyressa thyone (Northern little yellow-eared bat) protein is NADH-ubiquinone oxidoreductase chain 4L (MT-ND4L).